Reading from the N-terminus, the 145-residue chain is uncharacterized protein (145 aa).

The signal sequence occupies residues 1-26 (MAILLPLKSILPWCCITFSFLLSSSG).

This is an uncharacterized protein from Saccharomyces cerevisiae (strain ATCC 204508 / S288c) (Baker's yeast).